Here is a 120-residue protein sequence, read N- to C-terminus: Aspartate 1-decarboxylase (120 aa).

The active-site Schiff-base intermediate with substrate; via pyruvic acid is the serine 25. Serine 25 carries the pyruvic acid (Ser) modification. Substrate is bound at residue threonine 57. Tyrosine 58 (proton donor) is an active-site residue. A substrate-binding site is contributed by 73 to 75 (GAA).

It belongs to the PanD family. Heterooctamer of four alpha and four beta subunits. Requires pyruvate as cofactor. In terms of processing, is synthesized initially as an inactive proenzyme, which is activated by self-cleavage at a specific serine bond to produce a beta-subunit with a hydroxyl group at its C-terminus and an alpha-subunit with a pyruvoyl group at its N-terminus.

It localises to the cytoplasm. The catalysed reaction is L-aspartate + H(+) = beta-alanine + CO2. It participates in cofactor biosynthesis; (R)-pantothenate biosynthesis; beta-alanine from L-aspartate: step 1/1. Functionally, catalyzes the pyruvoyl-dependent decarboxylation of aspartate to produce beta-alanine. The chain is Aspartate 1-decarboxylase from Polynucleobacter asymbioticus (strain DSM 18221 / CIP 109841 / QLW-P1DMWA-1) (Polynucleobacter necessarius subsp. asymbioticus).